Here is a 376-residue protein sequence, read N- to C-terminus: Endo-1,4-beta-xylanase A (376 aa).

Residues 1–18 form the signal peptide; the sequence is MHLASSLFLLATLPFGFA. Positions 55–355 constitute a GH10 domain; it reads QRERAGLEDK…HPAYYGVVEA (301 aa). N-linked (GlcNAc...) asparagine glycosylation occurs at N100. The active-site Proton donor is E170. Residue E277 is the Nucleophile of the active site. An N-linked (GlcNAc...) asparagine glycan is attached at N358.

Belongs to the glycosyl hydrolase 10 (cellulase F) family.

Its subcellular location is the secreted. The enzyme catalyses Endohydrolysis of (1-&gt;4)-beta-D-xylosidic linkages in xylans.. The protein operates within glycan degradation; xylan degradation. Partial inhibition of activity is detected in the presence of Ag(+), Cu2(+) and SDS. Like most fungal xylanases, activity is completely inhibited by Hg(2+) since Hg(2+) could interact with tryptophan residues and oxidize the indole ring. Beta-mercaptoethanol enhances the enzymatic activity by counteracting the oxidation effects of the S-S linkage between cysteine residues. Endo-1,4-beta-xylanase involved in the hydrolysis of xylan, a major structural heterogeneous polysaccharide found in plant biomass representing the second most abundant polysaccharide in the biosphere, after cellulose. Is most active on birchwood xylan (defined as 100%), moderate on beechwood xylan (96.8%) and soluble wheat arabinoxylan (84.5%), and weak on insoluble wheat arabinoxylan (19.7%). Hydrolyzes substrates into a mixture of xylobiose and xylotriose, but no xylose. No activity was detected in the presence of barley beta-glucan, carboxymethyl cellulose-sodium (CMC-Na), and Avicel. Acts as an alkali-tolerant xylanase, exhibiting 68.8% of the activity at pH 9.0, and even 31.8% at pH 10.0. This Humicola insolens (Soft-rot fungus) protein is Endo-1,4-beta-xylanase A.